An 889-amino-acid chain; its full sequence is Disease resistance protein RPS5 (889 aa).

Gly-2 carries the N-myristoyl glycine lipid modification. Residue Cys-4 is the site of S-palmitoyl cysteine attachment. A coiled-coil region spans residues 29–58 (IHNLSKNLASLQKAMRMLKARQYDVIRRLE). Residues 140 to 444 (SEATPFADVD…SEGFINEKEG (305 aa)) enclose the NB-ARC domain. 183–190 (GMGGVGKT) contacts ATP. 6 LRR repeats span residues 518–539 (TVRK…HECA), 540–561 (ALTT…FFRC), 564–586 (HLVV…ISEL), 588–610 (SLRY…WTLK), 611–633 (KLIH…SNLW), and 634–656 (NLRT…KELQ).

Belongs to the disease resistance NB-LRR family. In uninfected plants, interacts with PBS1 through the coiled coil domain. Homodimer.

It localises to the cell membrane. Functionally, disease resistance (R) protein that specifically recognizes the avrPphB type III effector avirulence protein from Pseudomonas syringae. Also confers resistance against Hyaloperonospora parasitica (downy mildew). Resistance proteins guard the plant against pathogens that contain an appropriate avirulence protein via an indirect interaction with this avirulence protein. That triggers a defense system including the hypersensitive response, which restricts the pathogen growth. Requires PBS1 to trigger the defense reaction against avrPphB. In case of infection by Pseudomonas syringae, AvrPphB triggers RPS5-mediated defense mechanism via the cleavage of PBS1, suggesting that the cleavage of PBS1 could trigger an exchange of ADP for ATP, thereby activating RPS5. May function as a fine-tuned sensor of alterations in the structure of the effector target PBS1. This Arabidopsis thaliana (Mouse-ear cress) protein is Disease resistance protein RPS5 (RPS5).